Here is a 432-residue protein sequence, read N- to C-terminus: Trigger factor (432 aa).

Residues 161–246 (GTRATINFVG…VVKVESRELP (86 aa)) enclose the PPIase FKBP-type domain.

This sequence belongs to the FKBP-type PPIase family. Tig subfamily.

It localises to the cytoplasm. The enzyme catalyses [protein]-peptidylproline (omega=180) = [protein]-peptidylproline (omega=0). Functionally, involved in protein export. Acts as a chaperone by maintaining the newly synthesized protein in an open conformation. Functions as a peptidyl-prolyl cis-trans isomerase. This Aliivibrio fischeri (strain ATCC 700601 / ES114) (Vibrio fischeri) protein is Trigger factor.